A 311-amino-acid polypeptide reads, in one-letter code: Aspartate carbamoyltransferase catalytic subunit (311 aa).

Carbamoyl phosphate is bound by residues Arg58 and Thr59. Residue Lys86 participates in L-aspartate binding. Carbamoyl phosphate-binding residues include Arg108, His136, and Gln139. 2 residues coordinate L-aspartate: Arg169 and Arg224. The carbamoyl phosphate site is built by Gly265 and Pro266.

Belongs to the aspartate/ornithine carbamoyltransferase superfamily. ATCase family. In terms of assembly, heterododecamer (2C3:3R2) of six catalytic PyrB chains organized as two trimers (C3), and six regulatory PyrI chains organized as three dimers (R2).

It catalyses the reaction carbamoyl phosphate + L-aspartate = N-carbamoyl-L-aspartate + phosphate + H(+). It participates in pyrimidine metabolism; UMP biosynthesis via de novo pathway; (S)-dihydroorotate from bicarbonate: step 2/3. Functionally, catalyzes the condensation of carbamoyl phosphate and aspartate to form carbamoyl aspartate and inorganic phosphate, the committed step in the de novo pyrimidine nucleotide biosynthesis pathway. The sequence is that of Aspartate carbamoyltransferase catalytic subunit from Geotalea daltonii (strain DSM 22248 / JCM 15807 / FRC-32) (Geobacter daltonii).